Here is a 385-residue protein sequence, read N- to C-terminus: Calcium/calmodulin-dependent protein kinase type 1D (385 aa).

The Protein kinase domain occupies 23-279 (FEFKETLGTG…CEQAARHPWI (257 aa)). Residues 29–37 (LGTGAFSEV) and Lys52 contribute to the ATP site. Lys113 participates in a covalent cross-link: Glycyl lysine isopeptide (Lys-Gly) (interchain with G-Cter in SUMO2). Ser122 is subject to Phosphoserine. Asp144 (proton acceptor) is an active-site residue. Thr180 carries the post-translational modification Phosphothreonine; by CaMKK1 and CaMKK2. The tract at residues 279-319 (IAGDTALNKNIHESVSAQIRKNFAKSKWRQAFNATAVVRHM) is autoinhibitory domain. The calmodulin-binding stretch occupies residues 299–320 (KNFAKSKWRQAFNATAVVRHMR). A Nuclear export signal motif is present at residues 318–324 (HMRKLHL). The interval 360-385 (SSGVSGVGAERRPRPTTVTAVHSGSK) is disordered. The segment covering 375–385 (TTVTAVHSGSK) has biased composition (polar residues).

The protein belongs to the protein kinase superfamily. CAMK Ser/Thr protein kinase family. CaMK subfamily. As to expression, widely expressed. Highly and mostly expressed in polymorphonuclear leukocytes (neutrophilic and eosinophilic granulocytes) while little or no expression is observed in monocytes and lymphocytes.

The protein localises to the cytoplasm. Its subcellular location is the nucleus. The catalysed reaction is L-seryl-[protein] + ATP = O-phospho-L-seryl-[protein] + ADP + H(+). It catalyses the reaction L-threonyl-[protein] + ATP = O-phospho-L-threonyl-[protein] + ADP + H(+). Its activity is regulated as follows. Activated by Ca(2+)/calmodulin. Binding of calmodulin results in conformational change that relieves intrasteric autoinhibition and allows phosphorylation of Thr-180 within the activation loop by CaMKK1 or CaMKK2. Phosphorylation of Thr-180 results in several fold increase in total activity. Unlike CaMK4, may be unable to exhibit autonomous activity after Ca(2+)/calmodulin activation. Its function is as follows. Calcium/calmodulin-dependent protein kinase that operates in the calcium-triggered CaMKK-CaMK1 signaling cascade and, upon calcium influx, activates CREB-dependent gene transcription, regulates calcium-mediated granulocyte function and respiratory burst and promotes basal dendritic growth of hippocampal neurons. In neutrophil cells, required for cytokine-induced proliferative responses and activation of the respiratory burst. Activates the transcription factor CREB1 in hippocampal neuron nuclei. May play a role in apoptosis of erythroleukemia cells. In vitro, phosphorylates transcription factor CREM isoform Beta. This is Calcium/calmodulin-dependent protein kinase type 1D (CAMK1D) from Homo sapiens (Human).